The sequence spans 213 residues: N-(5'-phosphoribosyl)anthranilate isomerase (213 aa).

The protein belongs to the TrpF family.

It carries out the reaction N-(5-phospho-beta-D-ribosyl)anthranilate = 1-(2-carboxyphenylamino)-1-deoxy-D-ribulose 5-phosphate. Its pathway is amino-acid biosynthesis; L-tryptophan biosynthesis; L-tryptophan from chorismate: step 3/5. The sequence is that of N-(5'-phosphoribosyl)anthranilate isomerase from Methanocella arvoryzae (strain DSM 22066 / NBRC 105507 / MRE50).